Reading from the N-terminus, the 156-residue chain is ATP synthase subunit b (156 aa).

The helical transmembrane segment at 7-29 (LFAQMVVFLVLAWFTMKFVWPPL) threads the bilayer.

It belongs to the ATPase B chain family. F-type ATPases have 2 components, F(1) - the catalytic core - and F(0) - the membrane proton channel. F(1) has five subunits: alpha(3), beta(3), gamma(1), delta(1), epsilon(1). F(0) has three main subunits: a(1), b(2) and c(10-14). The alpha and beta chains form an alternating ring which encloses part of the gamma chain. F(1) is attached to F(0) by a central stalk formed by the gamma and epsilon chains, while a peripheral stalk is formed by the delta and b chains.

It localises to the cell inner membrane. F(1)F(0) ATP synthase produces ATP from ADP in the presence of a proton or sodium gradient. F-type ATPases consist of two structural domains, F(1) containing the extramembraneous catalytic core and F(0) containing the membrane proton channel, linked together by a central stalk and a peripheral stalk. During catalysis, ATP synthesis in the catalytic domain of F(1) is coupled via a rotary mechanism of the central stalk subunits to proton translocation. Functionally, component of the F(0) channel, it forms part of the peripheral stalk, linking F(1) to F(0). The protein is ATP synthase subunit b of Burkholderia pseudomallei (strain 668).